The sequence spans 159 residues: 2-C-methyl-D-erythritol 2,4-cyclodiphosphate synthase (159 aa).

The a divalent metal cation site is built by D10 and H12. 4-CDP-2-C-methyl-D-erythritol 2-phosphate is bound by residues 10 to 12 (DVH) and 37 to 38 (HS). H45 contacts a divalent metal cation. 4-CDP-2-C-methyl-D-erythritol 2-phosphate-binding positions include 59 to 61 (DIG), 64 to 68 (FLDTD), 103 to 109 (AQAPKML), 135 to 138 (TTTE), F142, and R145.

Belongs to the IspF family. In terms of assembly, homotrimer. The cofactor is a divalent metal cation.

It catalyses the reaction 4-CDP-2-C-methyl-D-erythritol 2-phosphate = 2-C-methyl-D-erythritol 2,4-cyclic diphosphate + CMP. The protein operates within isoprenoid biosynthesis; isopentenyl diphosphate biosynthesis via DXP pathway; isopentenyl diphosphate from 1-deoxy-D-xylulose 5-phosphate: step 4/6. Functionally, involved in the biosynthesis of isopentenyl diphosphate (IPP) and dimethylallyl diphosphate (DMAPP), two major building blocks of isoprenoid compounds. Catalyzes the conversion of 4-diphosphocytidyl-2-C-methyl-D-erythritol 2-phosphate (CDP-ME2P) to 2-C-methyl-D-erythritol 2,4-cyclodiphosphate (ME-CPP) with a corresponding release of cytidine 5-monophosphate (CMP). In Francisella tularensis subsp. holarctica (strain FTNF002-00 / FTA), this protein is 2-C-methyl-D-erythritol 2,4-cyclodiphosphate synthase.